The sequence spans 138 residues: Prefoldin subunit alpha (138 aa).

It belongs to the prefoldin subunit alpha family. As to quaternary structure, heterohexamer of two alpha and four beta subunits.

Its subcellular location is the cytoplasm. In terms of biological role, molecular chaperone capable of stabilizing a range of proteins. Seems to fulfill an ATP-independent, HSP70-like function in archaeal de novo protein folding. The polypeptide is Prefoldin subunit alpha (Methanococcoides burtonii (strain DSM 6242 / NBRC 107633 / OCM 468 / ACE-M)).